The primary structure comprises 139 residues: Diacylglycerol acyltransferase/mycolyltransferase Ag85A (139 aa).

The Nucleophile role is filled by serine 10. Serine 10 and aspartate 38 together coordinate substrate. Residue glutamate 114 is part of the active site. Residues 116–119 and lysine 123 each bind substrate; that span reads FVRT.

The protein belongs to the mycobacterial A85 antigen family. As to quaternary structure, homodimer.

The protein localises to the secreted. It is found in the cell wall. The protein resides in the cytoplasm. The catalysed reaction is an acyl-CoA + a 1,2-diacyl-sn-glycerol = a triacyl-sn-glycerol + CoA. It catalyses the reaction 2 alpha,alpha'-trehalose 6-mycolate = alpha,alpha'-trehalose 6,6'-bismycolate + alpha,alpha-trehalose. Its function is as follows. The antigen 85 proteins (FbpA, FbpB, FbpC) are responsible for the high affinity of mycobacteria for fibronectin, a large adhesive glycoprotein, which facilitates the attachment of M.tuberculosis to murine alveolar macrophages (AMs). They also help to maintain the integrity of the cell wall by catalyzing the transfer of mycolic acids to cell wall arabinogalactan, and through the synthesis of alpha,alpha-trehalose dimycolate (TDM, cord factor). They catalyze the transfer of a mycoloyl residue from one molecule of alpha,alpha-trehalose monomycolate (TMM) to another TMM, leading to the formation of TDM. FbpA mediates triacylglycerol (TAG) formation with long-chain acyl-CoA as the acyl donor and 1,2-dipalmitoyl-sn-glycerol (1,2-dipalmitin) as the acyl acceptor. It has a preference for C26:0-CoA over C18:1-CoA. The protein is Diacylglycerol acyltransferase/mycolyltransferase Ag85A (fbpA) of Mycobacterium marinum.